Consider the following 520-residue polypeptide: Retinoic acid receptor RXR-beta (520 aa).

Residues 1 to 167 are disordered; it reads MSWATRPPFL…GGSGPPEDVK (167 aa). The interval 1 to 191 is modulating; it reads MSWATRPPFL…PGGPGAGKRL (191 aa). Arg-25 carries the post-translational modification Omega-N-methylarginine. Residues 64–79 are compositionally biased toward basic and acidic residues; that stretch reads EAGRDGMGDSGRDSRS. Residues 95 to 118 are compositionally biased toward pro residues; it reads SSPPGPPLTPSAPPPPMPPPPLGS. A compositionally biased stretch (low complexity) spans 119-130; sequence PFPVISSSMGSP. Pro residues predominate over residues 131–140; the sequence is GLPPPAPPGF. 2 consecutive NR C4-type zinc fingers follow at residues 192–212 and 228–252; these read CAIC…CEGC and CRDN…YQKC. Positions 192–257 form a DNA-binding region, nuclear receptor; sequence CAICGDRSSG…RYQKCLATGM (66 aa). Residues 258–382 form a hinge region; sequence KREAVQEERQ…HRSIDVRDGI (125 aa). Residues 263-275 show a composition bias toward basic and acidic residues; sequence QEERQRGKDKDGD. Disordered regions lie at residues 263 to 285 and 300 to 323; these read QEER…APEE and QKSD…NDPV. Residues 283–516 enclose the NR LBD domain; that stretch reads PEEMPVDRIL…TFLMEMLEAP (234 aa). Residues 307 to 317 are compositionally biased toward gly residues; it reads EGPGATGGGGS.

This sequence belongs to the nuclear hormone receptor family. NR2 subfamily. Homodimer (in vitro). Heterodimer with other retinoic acid receptor family members. Binds DNA preferentially as a RAR/RXR heterodimer. Interacts with NR1H3. Interacts with AKAP13. In all tissues tested, including brain, thymus, spleen and liver.

It is found in the nucleus. Its subcellular location is the cytoplasm. Its function is as follows. Receptor for retinoic acid. Retinoic acid receptors bind as heterodimers to their target response elements in response to their ligands, all-trans or 9-cis retinoic acid, and regulate gene expression in various biological processes. The RAR/RXR heterodimers bind to the retinoic acid response elements (RARE). In Mus musculus (Mouse), this protein is Retinoic acid receptor RXR-beta (Rxrb).